The sequence spans 213 residues: Mediator of RNA polymerase II transcription subunit 7 (213 aa).

Residues 96–120 (TELENGTTTEVEPSPQDSQSGTNYE) are disordered. The span at 97-120 (ELENGTTTEVEPSPQDSQSGTNYE) shows a compositional bias: polar residues.

Belongs to the Mediator complex subunit 7 family. Component of the Mediator complex.

It is found in the nucleus. In terms of biological role, component of the Mediator complex, a coactivator involved in the regulated transcription of nearly all RNA polymerase II-dependent genes. Mediator functions as a bridge to convey information from gene-specific regulatory proteins to the basal RNA polymerase II transcription machinery. Mediator is recruited to promoters by direct interactions with regulatory proteins and serves as a scaffold for the assembly of a functional preinitiation complex with RNA polymerase II and the general transcription factors. This Kluyveromyces lactis (strain ATCC 8585 / CBS 2359 / DSM 70799 / NBRC 1267 / NRRL Y-1140 / WM37) (Yeast) protein is Mediator of RNA polymerase II transcription subunit 7 (MED7).